Consider the following 146-residue polypeptide: D-aminoacyl-tRNA deacylase (146 aa).

The Gly-cisPro motif, important for rejection of L-amino acids signature appears at 137–138 (GP).

This sequence belongs to the DTD family. Homodimer.

It localises to the cytoplasm. The catalysed reaction is glycyl-tRNA(Ala) + H2O = tRNA(Ala) + glycine + H(+). The enzyme catalyses a D-aminoacyl-tRNA + H2O = a tRNA + a D-alpha-amino acid + H(+). Functionally, an aminoacyl-tRNA editing enzyme that deacylates mischarged D-aminoacyl-tRNAs. Also deacylates mischarged glycyl-tRNA(Ala), protecting cells against glycine mischarging by AlaRS. Acts via tRNA-based rather than protein-based catalysis; rejects L-amino acids rather than detecting D-amino acids in the active site. By recycling D-aminoacyl-tRNA to D-amino acids and free tRNA molecules, this enzyme counteracts the toxicity associated with the formation of D-aminoacyl-tRNA entities in vivo and helps enforce protein L-homochirality. The protein is D-aminoacyl-tRNA deacylase of Acinetobacter baylyi (strain ATCC 33305 / BD413 / ADP1).